A 296-amino-acid chain; its full sequence is Isoprenyl transferase (296 aa).

Positions 1–11 are enriched in basic residues; that stretch reads MATERNRRRKG. The disordered stretch occupies residues 1 to 29; sequence MATERNRRRKGSYPQLPPAPDDYPTFPDK. Residue Asp76 is part of the active site. Asp76 provides a ligand contact to Mg(2+). Substrate contacts are provided by residues 77–80, Trp81, Arg89, His93, and 121–123; these read GNGR and STE. Asn124 serves as the catalytic Proton acceptor. Residues Trp125, Arg127, Arg244, and 250-252 each bind substrate; that span reads RAS. Mg(2+) is bound at residue Glu263.

This sequence belongs to the UPP synthase family. In terms of assembly, homodimer. Mg(2+) serves as cofactor.

Functionally, catalyzes the condensation of isopentenyl diphosphate (IPP) with allylic pyrophosphates generating different type of terpenoids. The sequence is that of Isoprenyl transferase from Mycolicibacterium parafortuitum (Mycobacterium parafortuitum).